A 916-amino-acid polypeptide reads, in one-letter code: RNA-directed DNA polymerase from mobile element jockey (916 aa).

Positions 483 to 757 constitute a Reverse transcriptase domain; the sequence is SVLDVGYFPK…QAYKYLGITL (275 aa).

Mg(2+) serves as cofactor. Mn(2+) is required as a cofactor.

It catalyses the reaction DNA(n) + a 2'-deoxyribonucleoside 5'-triphosphate = DNA(n+1) + diphosphate. Inactivated by sulphydryl reagent. In Drosophila melanogaster (Fruit fly), this protein is RNA-directed DNA polymerase from mobile element jockey (pol).